We begin with the raw amino-acid sequence, 148 residues long: Lysozyme C-2 (148 aa).

Residues 1 to 18 form the signal peptide; that stretch reads MKTLLTLGLLLLSVTAQA. Residues 19–148 enclose the C-type lysozyme domain; it reads KVYERCEFAR…LSQYIRNCGV (130 aa). Cystine bridges form between Cys24-Cys146, Cys48-Cys134, Cys83-Cys99, and Cys95-Cys113. Active-site residues include Glu53 and Asp71.

The protein belongs to the glycosyl hydrolase 22 family. Monomer. Expressed weakly in myeloblasts, moderately in immature macrophages, and strongly in both mature macrophages and macrophage-rich tissues.

The protein localises to the secreted. It carries out the reaction Hydrolysis of (1-&gt;4)-beta-linkages between N-acetylmuramic acid and N-acetyl-D-glucosamine residues in a peptidoglycan and between N-acetyl-D-glucosamine residues in chitodextrins.. In terms of biological role, lysozymes have primarily a bacteriolytic function; those in tissues and body fluids are associated with the monocyte-macrophage system and enhance the activity of immunoagents. Lyz2 is active against a range of Gram-positive and Gram-negative bacteria. More effective than Lyz1 in killing Gram-negative bacteria. Lyz1 and Lyz2 are equally effective in killing Gram-positive bacteria. This chain is Lysozyme C-2 (Lyz2), found in Mus musculus (Mouse).